Here is a 338-residue protein sequence, read N- to C-terminus: Biotin synthase (338 aa).

Positions Asp45–Arg272 constitute a Radical SAM core domain. The [4Fe-4S] cluster site is built by Cys60, Cys64, and Cys67. [2Fe-2S] cluster contacts are provided by Cys104, Cys135, Cys195, and Arg267.

It belongs to the radical SAM superfamily. Biotin synthase family. Homodimer. Requires [4Fe-4S] cluster as cofactor. It depends on [2Fe-2S] cluster as a cofactor.

The enzyme catalyses (4R,5S)-dethiobiotin + (sulfur carrier)-SH + 2 reduced [2Fe-2S]-[ferredoxin] + 2 S-adenosyl-L-methionine = (sulfur carrier)-H + biotin + 2 5'-deoxyadenosine + 2 L-methionine + 2 oxidized [2Fe-2S]-[ferredoxin]. Its pathway is cofactor biosynthesis; biotin biosynthesis; biotin from 7,8-diaminononanoate: step 2/2. In terms of biological role, catalyzes the conversion of dethiobiotin (DTB) to biotin by the insertion of a sulfur atom into dethiobiotin via a radical-based mechanism. This Parvibaculum lavamentivorans (strain DS-1 / DSM 13023 / NCIMB 13966) protein is Biotin synthase.